The following is a 2614-amino-acid chain: Talin-B (2614 aa).

The region spanning arginine 85–arginine 369 is the FERM domain. Positions arginine 393–proline 421 are disordered. Over residues glutamine 395–serine 406 the composition is skewed to low complexity. 2 coiled-coil regions span residues threonine 1938–lysine 1965 and asparagine 2033–serine 2057. One can recognise an I/LWEQ domain in the interval leucine 2219 to glutamine 2460. The tract at residues lysine 2454–lysine 2557 is disordered. Positions lysine 2473–arginine 2487 are enriched in polar residues. The segment covering lysine 2517–serine 2537 has biased composition (low complexity). A compositionally biased stretch (pro residues) spans lysine 2538–alanine 2548. Residues alanine 2553–phenylalanine 2614 form the HP domain.

It is found in the cytoplasm. It localises to the cytoskeleton. The protein resides in the cell cortex. Actin-binding protein required for multicellular morphogenesis. Substrate of pkgB and/or pkbA. This Dictyostelium discoideum (Social amoeba) protein is Talin-B (talB).